The following is a 239-amino-acid chain: Ribonuclease PH (239 aa).

Phosphate-binding positions include Arg86 and 124-126 (GTR).

The protein belongs to the RNase PH family. As to quaternary structure, homohexameric ring arranged as a trimer of dimers.

The enzyme catalyses tRNA(n+1) + phosphate = tRNA(n) + a ribonucleoside 5'-diphosphate. Functionally, phosphorolytic 3'-5' exoribonuclease that plays an important role in tRNA 3'-end maturation. Removes nucleotide residues following the 3'-CCA terminus of tRNAs; can also add nucleotides to the ends of RNA molecules by using nucleoside diphosphates as substrates, but this may not be physiologically important. Probably plays a role in initiation of 16S rRNA degradation (leading to ribosome degradation) during starvation. This is Ribonuclease PH from Rickettsia bellii (strain RML369-C).